We begin with the raw amino-acid sequence, 257 residues long: Ribonuclease HII (257 aa).

Residues 72–257 (TYIAGIDEVG…FAPIKDMIQK (186 aa)) enclose the RNase H type-2 domain. Residues D78, E79, and D170 each contribute to the a divalent metal cation site.

This sequence belongs to the RNase HII family. Mn(2+) serves as cofactor. Requires Mg(2+) as cofactor.

It is found in the cytoplasm. The catalysed reaction is Endonucleolytic cleavage to 5'-phosphomonoester.. Functionally, endonuclease that specifically degrades the RNA of RNA-DNA hybrids. The chain is Ribonuclease HII from Bacillus cereus (strain ATCC 14579 / DSM 31 / CCUG 7414 / JCM 2152 / NBRC 15305 / NCIMB 9373 / NCTC 2599 / NRRL B-3711).